A 397-amino-acid chain; its full sequence is Protein irld-34 (397 aa).

In Caenorhabditis elegans, this protein is Protein irld-34.